The sequence spans 440 residues: Xylose isomerase (440 aa).

Catalysis depends on residues His101 and Asp104. Positions 232, 268, 271, 296, 307, 309, and 339 each coordinate Mg(2+).

It belongs to the xylose isomerase family. In terms of assembly, homotetramer. Requires Mg(2+) as cofactor.

Its subcellular location is the cytoplasm. It carries out the reaction alpha-D-xylose = alpha-D-xylulofuranose. In Escherichia coli (strain SE11), this protein is Xylose isomerase.